A 354-amino-acid chain; its full sequence is Uroporphyrinogen decarboxylase (354 aa).

Residues 30-34, phenylalanine 49, aspartate 79, tyrosine 156, serine 211, and histidine 326 contribute to the substrate site; that span reads RQAGR.

Belongs to the uroporphyrinogen decarboxylase family. Homodimer.

It is found in the cytoplasm. The enzyme catalyses uroporphyrinogen III + 4 H(+) = coproporphyrinogen III + 4 CO2. It participates in porphyrin-containing compound metabolism; protoporphyrin-IX biosynthesis; coproporphyrinogen-III from 5-aminolevulinate: step 4/4. In terms of biological role, catalyzes the decarboxylation of four acetate groups of uroporphyrinogen-III to yield coproporphyrinogen-III. This is Uroporphyrinogen decarboxylase from Salinibacter ruber (strain DSM 13855 / M31).